We begin with the raw amino-acid sequence, 448 residues long: Na(+)-translocating NADH-quinone reductase subunit A (448 aa).

The protein belongs to the NqrA family. As to quaternary structure, composed of six subunits; NqrA, NqrB, NqrC, NqrD, NqrE and NqrF.

It carries out the reaction a ubiquinone + n Na(+)(in) + NADH + H(+) = a ubiquinol + n Na(+)(out) + NAD(+). NQR complex catalyzes the reduction of ubiquinone-1 to ubiquinol by two successive reactions, coupled with the transport of Na(+) ions from the cytoplasm to the periplasm. NqrA to NqrE are probably involved in the second step, the conversion of ubisemiquinone to ubiquinol. The chain is Na(+)-translocating NADH-quinone reductase subunit A from Alcanivorax borkumensis (strain ATCC 700651 / DSM 11573 / NCIMB 13689 / SK2).